The chain runs to 310 residues: Serine protease 30 (310 aa).

The first 21 residues, 1 to 21 (MESRARCIFLLLLQILTRARG), serve as a signal peptide directing secretion. Positions 22–36 (DILPSVCGHSRDAGK) are cleaved as a propeptide — activation peptide. One can recognise a Peptidase S1 domain in the interval 37–277 (IVGGQDALEG…YVDWIQRILA (241 aa)). A disulfide bridge connects residues Cys63 and Cys79. Residues His78 and Asp128 each act as charge relay system in the active site. 3 cysteine pairs are disulfide-bonded: Cys161–Cys235, Cys191–Cys214, and Cys225–Cys253. Residue Ser229 is the Charge relay system of the active site. Asn238 and Asn279 each carry an N-linked (GlcNAc...) asparagine glycan. Ser281 is lipidated: GPI-anchor amidated serine. The propeptide at 282–310 (DAYGYHSSASAAYQMLLPVLLAVALPGSL) is removed in mature form.

The protein belongs to the peptidase S1 family. In terms of tissue distribution, expressed primarily in distal gut.

The protein resides in the cell membrane. With respect to regulation, inhibited by aprotinin, leupeptin, benzamidine and soybean trypsin inhibitor. Partially inhibited by PMSF and DFP. Selectively cleaves synthetic peptide substrates of trypsin. Activates the epithelial sodium channel ENaC. This is Serine protease 30 (Prss30) from Mus musculus (Mouse).